Consider the following 148-residue polypeptide: Ribonuclease H (148 aa).

An RNase H type-1 domain is found at 3–144 (DKEQVVIYTD…ADQLANRGVA (142 aa)). Mg(2+) is bound by residues Asp-12, Glu-50, Asp-72, and Asp-136. The disordered stretch occupies residues 125-148 (GHTGDPGNERADQLANRGVAELPR).

The protein belongs to the RNase H family. As to quaternary structure, monomer. Mg(2+) serves as cofactor.

The protein resides in the cytoplasm. It catalyses the reaction Endonucleolytic cleavage to 5'-phosphomonoester.. Its function is as follows. Endonuclease that specifically degrades the RNA of RNA-DNA hybrids. In Pseudomonas aeruginosa (strain LESB58), this protein is Ribonuclease H.